The sequence spans 494 residues: DEAD-box ATP-dependent RNA helicase 20 (494 aa).

A compositionally biased stretch (basic and acidic residues) spans methionine 1 to glutamate 20. The disordered stretch occupies residues methionine 1–alanine 39. Residues alanine 29–alanine 39 show a composition bias toward low complexity. A Q motif motif is present at residues arginine 91–serine 119. One can recognise a Helicase ATP-binding domain in the interval tryptophan 122–valine 297. Alanine 135 to threonine 142 lines the ATP pocket. A DEAD box motif is present at residues aspartate 245–aspartate 248. The 146-residue stretch at lysine 325 to glycine 470 folds into the Helicase C-terminal domain. Residues glutamate 465–serine 494 form a disordered region.

It belongs to the DEAD box helicase family. DDX5/DBP2 subfamily.

The protein resides in the nucleus. It catalyses the reaction ATP + H2O = ADP + phosphate + H(+). Its function is as follows. ATP-dependent RNA helicase involved nonsense-mediated mRNA decay and ribosome biogenesis through rRNA processing. The polypeptide is DEAD-box ATP-dependent RNA helicase 20 (Oryza sativa subsp. japonica (Rice)).